Here is a 1088-residue protein sequence, read N- to C-terminus: DNA ligase 4 (1088 aa).

2 disordered regions span residues 1–56 (MALS…KFND) and 73–117 (TTTT…TTTT). 2 stretches are compositionally biased toward low complexity: residues 25 to 53 (DFKN…YNNK) and 73 to 90 (TTTT…INKT). The span at 95–105 (DDIFDDEDEDS) shows a compositional bias: acidic residues. The ATP site is built by Glu-414, Lys-416, Arg-421, Glu-467, Phe-514, Glu-574, Lys-579, Lys-596, and Lys-598. The N6-AMP-lysine intermediate role is filled by Lys-416. Glu-467 is a binding site for Mg(2+). Residue Glu-574 coordinates Mg(2+). BRCT domains lie at 827-917 (PTQN…PKYM) and 984-1088 (CWWS…EILD).

The protein belongs to the ATP-dependent DNA ligase family. It depends on Mg(2+) as a cofactor.

It is found in the nucleus. It catalyses the reaction ATP + (deoxyribonucleotide)n-3'-hydroxyl + 5'-phospho-(deoxyribonucleotide)m = (deoxyribonucleotide)n+m + AMP + diphosphate.. Functionally, DNA ligase involved in DNA non-homologous end joining (NHEJ); required for double-strand break (DSB) repair. The sequence is that of DNA ligase 4 (lig4) from Dictyostelium discoideum (Social amoeba).